Here is a 163-residue protein sequence, read N- to C-terminus: Putative H/ACA ribonucleoprotein complex subunit 2-like protein (163 aa).

This sequence belongs to the eukaryotic ribosomal protein eL8 family. Component of the small nucleolar ribonucleoprotein particle containing H/ACA-type snoRNAs (H/ACA snoRNPs).

It localises to the nucleus. It is found in the nucleolus. Its function is as follows. Required for ribosome biogenesis. Part of a complex which catalyzes pseudouridylation of rRNA. This involves the isomerization of uridine such that the ribose is subsequently attached to C5, instead of the normal N1. Pseudouridine ('psi') residues may serve to stabilize the conformation of rRNAs. The sequence is that of Putative H/ACA ribonucleoprotein complex subunit 2-like protein from Caenorhabditis briggsae.